The chain runs to 55 residues: Trypsin inhibitor ClTI-1 (55 aa).

One can recognise a Kazal-like domain in the interval 1-55 (SIPPACDKYSRLPGCPRDYSPVCGTDGKTYPNECVLCLSNSEENKNVQIYKSGMC). Intrachain disulfides connect C6/C37, C15/C34, and C23/C55.

The protein localises to the secreted. Its function is as follows. Inhibits trypsin and plasmin. The sequence is that of Trypsin inhibitor ClTI-1 from Gallus gallus (Chicken).